Consider the following 948-residue polypeptide: Protein translocase subunit SecA (948 aa).

ATP-binding positions include Gln-90, 108-112 (GEGKT), and Asp-509.

The protein belongs to the SecA family. In terms of assembly, monomer and homodimer. Part of the essential Sec protein translocation apparatus which comprises SecA, SecYEG and auxiliary proteins SecDF. Other proteins may also be involved.

The protein resides in the cell inner membrane. Its subcellular location is the cellular thylakoid membrane. The protein localises to the cytoplasm. It catalyses the reaction ATP + H2O + cellular proteinSide 1 = ADP + phosphate + cellular proteinSide 2.. Part of the Sec protein translocase complex. Interacts with the SecYEG preprotein conducting channel. Has a central role in coupling the hydrolysis of ATP to the transfer of proteins into and across the cell membrane, serving as an ATP-driven molecular motor driving the stepwise translocation of polypeptide chains across the membrane. Its function is as follows. Probably participates in protein translocation into and across both the cytoplasmic and thylakoid membranes in cyanobacterial cells. The sequence is that of Protein translocase subunit SecA from Prochlorococcus marinus (strain MIT 9313).